Reading from the N-terminus, the 530-residue chain is RNA-binding protein 39 (530 aa).

A disordered region spans residues 1 to 146; the sequence is MADDIDIEAM…PVREPIDNLT (146 aa). Ala-2 carries the post-translational modification N-acetylalanine. Over residues 14-32 the composition is skewed to basic and acidic residues; sequence PYKKDENKLSSANGHEERS. Composition is skewed to basic residues over residues 33 to 56 and 64 to 95; these read KKRKKSKSRSRSHERKRSKSKERK and KKSKSRERKRSRSKERRRSRSRSRDRRFRGRY. Tyr-95 bears the Phosphotyrosine mark. Ser-97 and Ser-100 each carry phosphoserine. Residue Lys-111 forms a Glycyl lysine isopeptide (Lys-Gly) (interchain with G-Cter in SUMO2) linkage. Ser-117 carries the phosphoserine modification. Lys-119 is covalently cross-linked (Glycyl lysine isopeptide (Lys-Gly) (interchain with G-Cter in SUMO2)). The segment covering 119-130 has biased composition (basic residues); that stretch reads KLSRRRSRSKSP. 2 positions are modified to phosphoserine: Ser-121 and Ser-136. A compositionally biased stretch (basic and acidic residues) spans 131 to 146; the sequence is FRKDKSPVREPIDNLT. The residue at position 146 (Thr-146) is a Phosphothreonine. The region spanning 153 to 230 is the RRM 1 domain; sequence RTVFCMQLAA…VPIIVQASQA (78 aa). A Glycyl lysine isopeptide (Lys-Gly) (interchain with G-Cter in SUMO2) cross-link involves residue Lys-244. The region spanning 250-328 is the RRM 2 domain; that stretch reads MRLYVGSLHF…RPMKVGHVTE (79 aa). The interval 291–355 is activating domain; sequence KGYGFITFSD…RTGIDLGTTG (65 aa). Residues 291–406 form an interaction with JUN region; sequence KGYGFITFSD…IDLQTRLSQQ (116 aa). A phosphoserine mark is found at Ser-334, Ser-337, and Ser-341. Residues 355–406 are interaction with ESR1 and ESR2; it reads GRLQLMARLAEGTGLQIPPAAQQALQMSGSLAFGAVAEFSFVIDLQTRLSQQ. Residues 406 to 530 are interaction with NCOA6; it reads QTEASALAAA…ATQLLVPSRR (125 aa). An RRM 3 domain is found at 445–508; the sequence is EIKDDVIEEC…KMITAAYVPL (64 aa).

It belongs to the splicing factor SR family. As to quaternary structure, interacts with NCOA6 and JUN. Interacts with ESR1 and ESR2, in the presence of estradiol (E2). Interacts with RSRC1 (via Arg/Ser-rich domain). Interacts with SF3B1. Interacts with ZNF106 (via N-terminus). In terms of processing, aryl sulfonamide anticancer drugs, such as indisulam (E7070) or E7820, promote ubiquitination and subsequent degradation by the DCX(DCAF15) complex. RBM39 degradation results in splicing defects and death in cancer cell lines. Aryl sulfonamide anticancer drugs change the substrate specificity of DCAF15 by acting as a molecular glue that promotes binding between DCAF15 and weak affinity interactor RBM39. As to expression, widely expressed. Highly expressed in pancreas, skeletal muscle, lung and brain. Expressed at intermediate level in kidney, liver and heart.

It is found in the nucleus speckle. In terms of biological role, RNA-binding protein that acts as a pre-mRNA splicing factor. Acts by promoting exon inclusion via regulation of exon cassette splicing. Also acts as a transcriptional coactivator for steroid nuclear receptors ESR1/ER-alpha and ESR2/ER-beta, and JUN/AP-1, independently of the pre-mRNA splicing factor activity. The sequence is that of RNA-binding protein 39 from Homo sapiens (Human).